The primary structure comprises 209 residues: FAS-associated death domain protein (209 aa).

In terms of domain architecture, DED spans Pro3–Asp81. A Death domain is found at Leu97–Gln181. Positions Gln187–Asp200 are enriched in polar residues. The interval Gln187 to Ser209 is disordered.

As to quaternary structure, can self-associate. Component of the AIM2 PANoptosome complex, a multiprotein complex that drives inflammatory cell death (PANoptosis). Component of the death-induced signaling complex (DISC) composed of cell surface receptor FAS/CD95 or TNFRSF1A, adapter protein FADD and the CASP8 protease; recruitment of CASP8 to the complex is required for processing of CASP8 into the p18 and p10 subunits. Interacts (via death domain) with FAS (via death domain). Interacts directly (via DED domain) with NOL3 (via CARD domain); inhibits death-inducing signaling complex (DISC) assembly by inhibiting the increase in FAS-FADD binding induced by FAS activation. Interacts with CFLAR, PEA15 and MBD4. When phosphorylated, part of a complex containing HIPK3 and FAS. May interact with MAVS/IPS1. Interacts with MOCV v-CFLAR protein and PIDD1. Interacts with RIPK1 and TRADD. Interacts with stimulated TNFRSF10B. Interacts with DDX24. Post-translationally, phosphorylated.

Its subcellular location is the cytoplasm. Functionally, apoptotic adapter molecule that recruits caspases CASP8 or CASP10 to the activated FAS/CD95 or TNFRSF1A/TNFR-1 receptors. The resulting aggregate called the death-inducing signaling complex (DISC) performs CASP8 proteolytic activation. Active CASP8 initiates the subsequent cascade of caspases mediating apoptosis. Involved in interferon-mediated antiviral immune response, playing a role in the positive regulation of interferon signaling. This Bos taurus (Bovine) protein is FAS-associated death domain protein.